The chain runs to 192 residues: Probable GTP-binding protein EngB (192 aa).

The region spanning 22-192 is the EngB-type G domain; that stretch reads NLPQIVIVGR…QVLSIFEKYA (171 aa). GTP is bound by residues 30–37, 57–61, 75–78, 142–145, and 173–175; these read GRSNVGKS, GKTRG, DLPG, TKAD, and FSA. Ser37 and Thr59 together coordinate Mg(2+).

This sequence belongs to the TRAFAC class TrmE-Era-EngA-EngB-Septin-like GTPase superfamily. EngB GTPase family. Mg(2+) is required as a cofactor.

Its function is as follows. Necessary for normal cell division and for the maintenance of normal septation. The sequence is that of Probable GTP-binding protein EngB from Thermoanaerobacter pseudethanolicus (strain ATCC 33223 / 39E) (Clostridium thermohydrosulfuricum).